We begin with the raw amino-acid sequence, 320 residues long: Cytochrome f (320 aa).

Positions 1–35 are cleaved as a signal peptide; that stretch reads MQTRNAFSWIKKEITRSISVLLMIYIITRAPISNA. The heme site is built by Tyr-36, Cys-56, Cys-59, and His-60. The helical transmembrane segment at 286-305 threads the bilayer; that stretch reads VQGLLLFLASIILAQILLVL.

It belongs to the cytochrome f family. As to quaternary structure, the 4 large subunits of the cytochrome b6-f complex are cytochrome b6, subunit IV (17 kDa polypeptide, petD), cytochrome f and the Rieske protein, while the 4 small subunits are PetG, PetL, PetM and PetN. The complex functions as a dimer. The cofactor is heme.

The protein resides in the plastid. It is found in the chloroplast thylakoid membrane. Functionally, component of the cytochrome b6-f complex, which mediates electron transfer between photosystem II (PSII) and photosystem I (PSI), cyclic electron flow around PSI, and state transitions. In Pisum sativum (Garden pea), this protein is Cytochrome f (petA).